The sequence spans 110 residues: Nucleoid-associated protein YpAngola_A2890 (110 aa).

The segment at 90–110 is disordered; the sequence is KEKMASVSNGMQLPPGFKMPF.

The protein belongs to the YbaB/EbfC family. As to quaternary structure, homodimer.

The protein localises to the cytoplasm. Its subcellular location is the nucleoid. Binds to DNA and alters its conformation. May be involved in regulation of gene expression, nucleoid organization and DNA protection. The sequence is that of Nucleoid-associated protein YpAngola_A2890 from Yersinia pestis bv. Antiqua (strain Angola).